The following is a 263-amino-acid chain: Putative SNAP25 homologous protein SNAP30 (263 aa).

Disordered stretches follow at residues 1–61 (MFGF…LQSQ) and 132–209 (NLGG…DGLS). Composition is skewed to polar residues over residues 8-34 (PGNN…TSSE) and 52-61 (FNDSGGLQSQ). Residues 158–173 (KPSKKSENHKEEREKL) show a composition bias toward basic and acidic residues. Residues 180–194 (RSSSQPALDQPTNAL) show a composition bias toward polar residues. Residues 197-206 (VEQEKAKQDD) are compositionally biased toward basic and acidic residues. The region spanning 198–260 (EQEKAKQDDG…QGANQRARHL (63 aa)) is the t-SNARE coiled-coil homology domain.

This sequence belongs to the SNAP-25 family.

Its subcellular location is the membrane. The protein resides in the cytoplasm. In terms of biological role, vesicle trafficking protein that functions in the secretory pathway. The sequence is that of Putative SNAP25 homologous protein SNAP30 (SNAP30) from Arabidopsis thaliana (Mouse-ear cress).